A 278-amino-acid polypeptide reads, in one-letter code: MFLVGSLVVLCGLLAHSTAQLAGLPLPLGQGPPLPLNQGPPLPLNQGQLLPLAQGLPLAVSPALPSNPTDLLAGKFTDALSGGLLSGGLLGILENIPLLDVIKSGGGNSNGLVGGLLGKLTSSVPLLNNILDIKITDPQLLELGLVQSPDGHRLYVTIPLGLTLNVNMPVVGSLLQLAVKLNITAEVLAVKDNQGRIHLVLGDCTHSPGSLKISLLNGVTPVQSFLDNLTGILTKVLPELIQGKVCPLVNGILSGLDVTLVHNIAELLIHGLQFVIKV.

The signal sequence occupies residues 1–19 (MFLVGSLVVLCGLLAHSTA). Repeat repeat units lie at residues 23-28 (GLPLPL), 30-36 (QGPPLPL), 39-44 (GPPLPL), and 47-52 (GQLLPL). Positions 23–52 (GLPLPLGQGPPLPLNQGPPLPLNQGQLLPL) are 4 X 6 AA repeats of G-[LPQ]-[PL]-L-P-L. Positions 112–117 (LVGGLL) are important for surfactant activity and antibacterial properties. N-linked (GlcNAc...) asparagine glycosylation is found at Asn182 and Asn228. A disulfide bridge links Cys204 with Cys246.

This sequence belongs to the BPI/LBP/Plunc superfamily. Plunc family. Monomer. Interacts (via N-terminus) with SCNN1B, a subunit of the heterotrimeric epithelial sodium channel (ENaC); this inhibits proteolytic activation of ENaC. As to expression, detected in airway epithelia (trachea and lung) and in bronchoalveolar fluid (at protein level). Upper airways, nasopharyngeal epithelium and thymus. Highest expression in the trachea and progressive decrease from proximal (bronchial) to distal (bronchiolar) airways. No expression is detected in the terminal bronchioles, respiratory bronchioles or lung alveoli.

The protein resides in the secreted. Functionally, lipid-binding protein which shows high specificity for the surfactant phospholipid dipalmitoylphosphatidylcholine (DPPC). Plays a role in the innate immune responses of the upper airways. Reduces the surface tension in secretions from airway epithelia and inhibits the formation of biofilm by pathogenic Gram-negative bacteria, such as P.aeruginosa and K.pneumoniae. Negatively regulates proteolytic cleavage of SCNN1G, an event that is required for activation of the epithelial sodium channel (ENaC), and thereby contributes to airway surface liquid homeostasis and proper clearance of mucus. Plays a role in the airway inflammatory response after exposure to irritants. May attract macrophages and neutrophils. In Mus musculus (Mouse), this protein is BPI fold-containing family A member 1 (Bpifa1).